The chain runs to 108 residues: Large ribosomal subunit protein bL31B (108 aa).

The segment at 86–108 (KPETVVEDVLPKGKKKSPAKKKK) is disordered. The segment covering 97–108 (KGKKKSPAKKKK) has biased composition (basic residues).

The protein belongs to the bacterial ribosomal protein bL31 family. Type B subfamily. Part of the 50S ribosomal subunit.

This Chlamydia trachomatis serovar L2 (strain ATCC VR-902B / DSM 19102 / 434/Bu) protein is Large ribosomal subunit protein bL31B.